The primary structure comprises 993 residues: DNA-binding protein SMUBP-2 (993 aa).

Alanine 2 bears the N-acetylalanine mark. Residues 213-220 (GPPGTGKT), glutamine 402, tyrosine 441, and glutamate 570 contribute to the ATP site. The segment at 637 to 783 (TAFEYLDDIV…KARHITVSRR (147 aa)) is SS DNA-binding. 3 disordered regions span residues 650–723 (YTHE…GPDR), 765–815 (LRHD…EPVT), and 837–872 (RQQS…KGPV). Composition is skewed to polar residues over residues 667 to 683 (PSTS…SGQE) and 703 to 716 (HVQS…NGSD). In terms of domain architecture, R3H spans 721–784 (PDRTEHFRAT…ARHITVSRRS (64 aa)). Basic and acidic residues predominate over residues 765–775 (LRHDSTGEGKA). Positions 784–794 (SPASSGSVAPQ) are enriched in low complexity. A phosphoserine mark is found at serine 797 and serine 800. The span at 837 to 847 (RQQSSQAQTAK) shows a compositional bias: polar residues. Residues 862-866 (KKKKK) carry the Nuclear localization signal motif. The segment at 889–938 (VKADNTCSFSKCSVSTTTLGQFCMHCSHRYYLSHHLPEIHGCGEKARAHA) adopts an AN1-type; degenerate zinc-finger fold. Zn(2+) contacts are provided by cysteine 911, cysteine 914, histidine 928, and cysteine 930. The disordered stretch occupies residues 953–993 (GTKDRALDPAKRAQLQRRLDKKLGELSSQRTSRKKEKERGT). Positions 954–976 (TKDRALDPAKRAQLQRRLDKKLG) are enriched in basic and acidic residues.

Belongs to the DNA2/NAM7 helicase family. Homooligomer. Interacts with RUVBL1. Interacts with RUVBL2. Interacts with GTF3C1. Interacts with ABT1. Interacts with ribosomes. In terms of tissue distribution, in all tissues examined.

Its subcellular location is the nucleus. It localises to the cytoplasm. The protein localises to the cell projection. It is found in the axon. The catalysed reaction is ATP + H2O = ADP + phosphate + H(+). In terms of biological role, 5' to 3' helicase that unwinds RNA and DNA duplexes in an ATP-dependent reaction. Specific to 5'-phosphorylated single-stranded guanine-rich sequences. May play a role in RNA metabolism, ribosome biogenesis or initiation of translation. May play a role in regulation of transcription. Interacts with tRNA-Tyr. The sequence is that of DNA-binding protein SMUBP-2 (Ighmbp2) from Mus musculus (Mouse).